Consider the following 78-residue polypeptide: UPF0349 protein BPUM_2879 (78 aa).

This sequence belongs to the UPF0349 family.

The protein is UPF0349 protein BPUM_2879 of Bacillus pumilus (strain SAFR-032).